Consider the following 440-residue polypeptide: Ferredoxin--NADP reductase (440 aa).

The CpcD-like domain occupies Ser-17–Val-75. Positions Ala-98–Ala-142 are disordered. A compositionally biased stretch (basic and acidic residues) spans Pro-122 to Lys-133. Residues Asn-155–Leu-279 enclose the FAD-binding FR-type domain. Residues Arg-214–Ser-217, Cys-235–Arg-237, Tyr-241, Val-253–Ser-255, and Thr-294 each bind FAD. The NADP(+) site is built by Ser-217 and Arg-237. NADP(+) is bound by residues Thr-294, Val-330 to Pro-331, Ser-360 to Arg-361, Arg-370 to Gln-374, Gly-399 to Leu-400, and Glu-438.

This sequence belongs to the ferredoxin--NADP reductase type 1 family. The cofactor is FAD.

The protein resides in the cellular thylakoid membrane. It catalyses the reaction 2 reduced [2Fe-2S]-[ferredoxin] + NADP(+) + H(+) = 2 oxidized [2Fe-2S]-[ferredoxin] + NADPH. In Nostoc sp. (strain PCC 7120 / SAG 25.82 / UTEX 2576), this protein is Ferredoxin--NADP reductase (petH).